A 381-amino-acid chain; its full sequence is Creatine kinase B-type (381 aa).

Serine 4 carries the post-translational modification Phosphoserine. Residues 11–98 (KLRFPAEDEF…FDPIIEERHG (88 aa)) enclose the Phosphagen kinase N-terminal domain. Threonine 35 is subject to Phosphothreonine. Lysine 45 is covalently cross-linked (Glycyl lysine isopeptide (Lys-Gly) (interchain with G-Cter in ubiquitin)). A creatine-binding site is contributed by valine 72. Residues 96-110 (RHGGYQPSDEHKTDL) show a composition bias toward basic and acidic residues. Positions 96-123 (RHGGYQPSDEHKTDLNPDNLQGGDDLDP) are disordered. Lysine 107 participates in a covalent cross-link: Glycyl lysine isopeptide (Lys-Gly) (interchain with G-Cter in ubiquitin). At tyrosine 125 the chain carries Phosphotyrosine. In terms of domain architecture, Phosphagen kinase C-terminal spans 125-367 (YVLSSRVRTG…KLLIEMEQRL (243 aa)). ATP contacts are provided by residues 128 to 132 (SSRVR), arginine 130, arginine 132, and histidine 191. The internal MTS-like signal stretch occupies residues 130–138 (RVRTGRSIR). A Phosphoserine modification is found at serine 199. Residue glutamate 232 coordinates creatine. Arginine 236 contacts ATP. The residue at position 269 (tyrosine 269) is a 3'-nitrotyrosine. Serine 285 is a creatine binding site. Arginine 292 lines the ATP pocket. Position 309 is a phosphoserine (serine 309). Residues arginine 320, 320-325 (RGTGGV), and aspartate 335 each bind ATP. Threonine 322 carries the post-translational modification Phosphothreonine. Residue lysine 381 forms a Glycyl lysine isopeptide (Lys-Gly) (interchain with G-Cter in ubiquitin) linkage.

This sequence belongs to the ATP:guanido phosphotransferase family. Dimer of identical or non-identical chains, which can be either B (brain type) or M (muscle type). With MM being the major form in skeletal muscle and myocardium, MB existing in myocardium, and BB existing in many tissues, especially brain. Interacts with SLC12A6 (via C-terminus); the interaction may be required for SLC12A6 potassium-chloride cotransport activity. In terms of processing, ubiquitinated by the ECS(ASB9) complex, leading to its degradation by the proteasome. Expressed in hippocampus and corpus callosum (at protein level).

Its subcellular location is the cytoplasm. It is found in the cytosol. The protein localises to the mitochondrion. It localises to the cell membrane. The enzyme catalyses creatine + ATP = N-phosphocreatine + ADP + H(+). Reversibly catalyzes the transfer of phosphate between ATP and various phosphogens (e.g. creatine phosphate). Creatine kinase isoenzymes play a central role in energy transduction in tissues with large, fluctuating energy demands, such as skeletal muscle, heart, brain and spermatozoa. Acts as a key regulator of adaptive thermogenesis as part of the futile creatine cycle: localizes to the mitochondria of thermogenic fat cells and acts by mediating phosphorylation of creatine to initiate a futile cycle of creatine phosphorylation and dephosphorylation. During the futile creatine cycle, creatine and N-phosphocreatine are in a futile cycle, which dissipates the high energy charge of N-phosphocreatine as heat without performing any mechanical or chemical work. This is Creatine kinase B-type from Mus musculus (Mouse).